The following is an 84-amino-acid chain: Small ribosomal subunit protein bS18 (84 aa).

It belongs to the bacterial ribosomal protein bS18 family. In terms of assembly, part of the 30S ribosomal subunit. Forms a tight heterodimer with protein bS6.

Binds as a heterodimer with protein bS6 to the central domain of the 16S rRNA, where it helps stabilize the platform of the 30S subunit. The sequence is that of Small ribosomal subunit protein bS18 from Clostridium kluyveri (strain NBRC 12016).